Consider the following 196-residue polypeptide: Molybdenum cofactor guanylyltransferase (196 aa).

Residues 10–12 (LAG), lysine 23, asparagine 51, aspartate 69, and aspartate 99 contribute to the GTP site. Aspartate 99 lines the Mg(2+) pocket.

The protein belongs to the MobA family. In terms of assembly, monomer. Mg(2+) is required as a cofactor.

The protein localises to the cytoplasm. It carries out the reaction Mo-molybdopterin + GTP + H(+) = Mo-molybdopterin guanine dinucleotide + diphosphate. Functionally, transfers a GMP moiety from GTP to Mo-molybdopterin (Mo-MPT) cofactor (Moco or molybdenum cofactor) to form Mo-molybdopterin guanine dinucleotide (Mo-MGD) cofactor. This chain is Molybdenum cofactor guanylyltransferase, found in Shewanella amazonensis (strain ATCC BAA-1098 / SB2B).